A 138-amino-acid polypeptide reads, in one-letter code: uncharacterized protein (138 aa).

Residues 17-38 constitute a DNA-binding region (H-T-H motif); it reads LCRNDVAHEAGTNNVQIMRIEK.

This is an uncharacterized protein from Herpetosiphon aurantiacus (Herpetosiphon giganteus).